Consider the following 374-residue polypeptide: Alanine racemase (374 aa).

The Proton acceptor; specific for D-alanine role is filled by Lys34. Lys34 carries the N6-(pyridoxal phosphate)lysine modification. A substrate-binding site is contributed by Arg147. Tyr271 (proton acceptor; specific for L-alanine) is an active-site residue. Met319 is a substrate binding site.

This sequence belongs to the alanine racemase family. The cofactor is pyridoxal 5'-phosphate.

It catalyses the reaction L-alanine = D-alanine. It participates in amino-acid biosynthesis; D-alanine biosynthesis; D-alanine from L-alanine: step 1/1. Catalyzes the interconversion of L-alanine and D-alanine. May also act on other amino acids. The protein is Alanine racemase (alr) of Haemophilus ducreyi (strain 35000HP / ATCC 700724).